The sequence spans 984 residues: Probable translation initiation factor IF-2 (984 aa).

The region spanning 94–215 (VNGWYSVTVT…LPLLLLRFGI (122 aa)) is the DOD-type homing endonuclease domain. Residues 391–608 (TTETHNFVAN…LIAGLSQKYL (218 aa)) form the tr-type G domain. GTP contacts are provided by residues 464–468 (DTPGH) and 518–521 (NKID).

Belongs to the TRAFAC class translation factor GTPase superfamily. Classic translation factor GTPase family. IF-2 subfamily. In terms of processing, this protein undergoes a protein self splicing that involves a post-translational excision of the intervening region (intein) followed by peptide ligation.

Functionally, function in general translation initiation by promoting the binding of the formylmethionine-tRNA to ribosomes. Seems to function along with eIF-2. The protein is Probable translation initiation factor IF-2 (infB) of Pyrococcus furiosus (strain ATCC 43587 / DSM 3638 / JCM 8422 / Vc1).